A 430-amino-acid chain; its full sequence is Glutamate-1-semialdehyde 2,1-aminomutase (430 aa).

At Lys-265 the chain carries N6-(pyridoxal phosphate)lysine.

This sequence belongs to the class-III pyridoxal-phosphate-dependent aminotransferase family. HemL subfamily. As to quaternary structure, homodimer. Pyridoxal 5'-phosphate serves as cofactor.

The protein resides in the cytoplasm. The catalysed reaction is (S)-4-amino-5-oxopentanoate = 5-aminolevulinate. It participates in porphyrin-containing compound metabolism; protoporphyrin-IX biosynthesis; 5-aminolevulinate from L-glutamyl-tRNA(Glu): step 2/2. In Shewanella putrefaciens (strain CN-32 / ATCC BAA-453), this protein is Glutamate-1-semialdehyde 2,1-aminomutase.